The following is a 237-amino-acid chain: Ribonuclease PH (237 aa).

Residues Arg-86 and 124-126 (GTR) each bind phosphate.

Belongs to the RNase PH family. In terms of assembly, homohexameric ring arranged as a trimer of dimers.

The enzyme catalyses tRNA(n+1) + phosphate = tRNA(n) + a ribonucleoside 5'-diphosphate. Functionally, phosphorolytic 3'-5' exoribonuclease that plays an important role in tRNA 3'-end maturation. Removes nucleotide residues following the 3'-CCA terminus of tRNAs; can also add nucleotides to the ends of RNA molecules by using nucleoside diphosphates as substrates, but this may not be physiologically important. Probably plays a role in initiation of 16S rRNA degradation (leading to ribosome degradation) during starvation. This Roseobacter denitrificans (strain ATCC 33942 / OCh 114) (Erythrobacter sp. (strain OCh 114)) protein is Ribonuclease PH.